The following is a 399-amino-acid chain: DNA polymerase IV (399 aa).

The 183-residue stretch at 5–187 (ILHCDLNNFY…LPVEALLYVG (183 aa)) folds into the UmuC domain. Mg(2+) contacts are provided by Asp-9 and Asp-105. Glu-106 is an active-site residue.

Belongs to the DNA polymerase type-Y family. Monomer. Requires Mg(2+) as cofactor.

Its subcellular location is the cytoplasm. The catalysed reaction is DNA(n) + a 2'-deoxyribonucleoside 5'-triphosphate = DNA(n+1) + diphosphate. Functionally, poorly processive, error-prone DNA polymerase involved in untargeted mutagenesis. Copies undamaged DNA at stalled replication forks, which arise in vivo from mismatched or misaligned primer ends. These misaligned primers can be extended by PolIV. Exhibits no 3'-5' exonuclease (proofreading) activity. May be involved in translesional synthesis, in conjunction with the beta clamp from PolIII. The protein is DNA polymerase IV of Acetivibrio thermocellus (strain ATCC 27405 / DSM 1237 / JCM 9322 / NBRC 103400 / NCIMB 10682 / NRRL B-4536 / VPI 7372) (Clostridium thermocellum).